The sequence spans 2225 residues: Nonribisomal peptide synthetase notE' (2225 aa).

The segment at 24 to 59 (TVRESLSSSPSPLPSLASPVSSGSEPPAFGETQPQS) is disordered. Over residues 28-49 (SLSSSPSPLPSLASPVSSGSEP) the composition is skewed to low complexity. The interval 83–482 (QERCKEAPQS…GRRDGQLKIR (400 aa)) is adenylation 1. Residues 614–690 (SPTTATELML…EQAQRATPMT (77 aa)) form the Carrier 1 domain. Ser-651 bears the O-(pantetheine 4'-phosphoryl)serine mark. Positions 730–1142 (EDIYPCTPLQ…DLASPLDQDL (413 aa)) are condensation 1. Positions 1164-1563 (AQAMQQPSRQ…GRRDTQVKVR (400 aa)) are adenylation 2. Residues 1699–1775 (PVSHGAELRL…DLARCTGEEQ (77 aa)) form the Carrier 2 domain. Residue Ser-1736 is modified to O-(pantetheine 4'-phosphoryl)serine. A condensation 2 region spans residues 1827 to 2138 (FAFHGEVSID…FILQHQNIDM (312 aa)).

The protein belongs to the NRP synthetase family.

The catalysed reaction is L-proline + L-tryptophan + 2 ATP = brevianamide F + 2 AMP + 2 diphosphate + 2 H(+). It functions in the pathway alkaloid biosynthesis. Functionally, nonribisomal peptide synthetase; part of the gene cluster that mediates the biosynthesis of notoamide, a fungal indole alkaloid that belongs to a family of natural products containing a characteristic bicyclo[2.2.2]diazaoctane core. The first step of notoamide biosynthesis involves coupling of L-proline and L-tryptophan by the bimodular NRPS notE', to produce cyclo-L-tryptophan-L-proline called brevianamide F. The reverse prenyltransferase notF' then acts as a deoxybrevianamide E synthase and converts brevianamide F to deoxybrevianamide E via reverse prenylation at C-2 of the indole ring leading to the bicyclo[2.2.2]diazaoctane core. Deoxybrevianamide E is further hydroxylated at C-6 of the indole ring, likely catalyzed by the cytochrome P450 monooxygenase notG', to yield 6-hydroxy-deoxybrevianamide E. 6-hydroxy-deoxybrevianamide E is a specific substrate of the prenyltransferase notC' for normal prenylation at C-7 to produce 6-hydroxy-7-prenyl-deoxybrevianamide, also called notoamide S. As the proposed pivotal branching point in notoamide biosynthesis, notoamide S can be diverted to notoamide E through an oxidative pyran ring closure putatively catalyzed by either notH' cytochrome P450 monooxygenase or the notD' FAD-linked oxidoreductase. This step would be followed by an indole 2,3-epoxidation-initiated pinacol-like rearrangement catalyzed by the notB' FAD-dependent monooxygenase leading to the formation of notoamide C and notoamide D. On the other hand notoamide S is converted to notoamide T by notH' (or notD'), a bifunctional oxidase that also functions as the intramolecular Diels-Alderase responsible for generation of (-)-notoamide T. To generate antipodal (+)-notoaminide T, notH (or notD) in Aspergillus strain MF297-2 is expected to catalyze a Diels-Alder reaction leading to the opposite stereochemistry. The remaining oxidoreductase notD' (or notH') likely catalyzes the oxidative pyran ring formation to yield (-)-stephacidin A. The FAD-dependent monooxygenase notI' is highly similar to notB' and is predicted to catalyze a similar conversion from (-)-stephacidin A to (+)-notoamide B via the 2,3-epoxidation of (-)-stephacidin A followed by a pinacol-type rearrangement. Finally, it remains unclear which enzyme could be responsible for the final hydroxylation steps leading to notoamide A and sclerotiamide. The sequence is that of Nonribisomal peptide synthetase notE' from Aspergillus versicolor.